The primary structure comprises 251 residues: Triosephosphate isomerase (251 aa).

Substrate is bound at residue 9 to 11 (NWK). The Electrophile role is filled by histidine 94. Residue glutamate 166 is the Proton acceptor of the active site. Substrate is bound by residues glycine 172, serine 211, and 232–233 (GG).

Belongs to the triosephosphate isomerase family. In terms of assembly, homodimer.

It localises to the cytoplasm. The catalysed reaction is D-glyceraldehyde 3-phosphate = dihydroxyacetone phosphate. It participates in carbohydrate biosynthesis; gluconeogenesis. Its pathway is carbohydrate degradation; glycolysis; D-glyceraldehyde 3-phosphate from glycerone phosphate: step 1/1. Its function is as follows. Involved in the gluconeogenesis. Catalyzes stereospecifically the conversion of dihydroxyacetone phosphate (DHAP) to D-glyceraldehyde-3-phosphate (G3P). This chain is Triosephosphate isomerase, found in Stenotrophomonas maltophilia (strain K279a).